A 1094-amino-acid chain; its full sequence is AP-3 complex subunit beta-1 (1094 aa).

Polar residues predominate over residues 1 to 11 (MSSNSFPYNEQ). Disordered regions lie at residues 1-31 (MSSN…ISPS) and 268-292 (DNGK…KPYT). Ser276 and Ser609 each carry phosphoserine. The tract at residues 662-811 (PAGKAKQENS…EKKTKQDRTP (150 aa)) is disordered. A compositionally biased stretch (basic and acidic residues) spans 666-677 (AKQENSAKKFYS). 2 stretches are compositionally biased toward acidic residues: residues 678 to 696 (ESEE…ESES) and 705 to 726 (ESGE…EQDS). 2 stretches are compositionally biased toward basic and acidic residues: residues 727–738 (ESGRESGLENKR) and 748–764 (GKSD…KSKT). A phosphoserine mark is found at Ser750 and Ser752. Residues 765 to 777 (SDSSNDESSSIED) are compositionally biased toward low complexity. The segment covering 778–791 (SSSDSESESEPESE) has biased composition (acidic residues). The span at 792–811 (SESRRVTKEKEKKTKQDRTP) shows a compositional bias: basic and acidic residues.

This sequence belongs to the adaptor complexes large subunit family. Adaptor protein complex 3 (AP-3) is a heterotetramer composed of two large adaptins (delta-type subunit AP3D1 and beta-type subunit AP3B1 or AP3B2), a medium adaptin (mu-type subunit AP3M1 or AP3M2) and a small adaptin (sigma-type subunit APS1 or AP3S2). AP-3 associates with the BLOC-1 complex. Interacts with KIF3A; interaction is direct; interaction is impaired by pyrophosphorylation of AP3B1. Post-translationally, phosphorylated on serine residues. Pyrophosphorylation by 5-diphosphoinositol pentakisphosphate (5-IP7) impairs interaction with KIF3A. Serine pyrophosphorylation is achieved by Mg(2+)-dependent, but enzyme independent transfer of a beta-phosphate from a inositol pyrophosphate to a pre-phosphorylated serine residue. As to expression, ubiquitously expressed.

The protein localises to the cytoplasmic vesicle. The protein resides in the clathrin-coated vesicle membrane. It localises to the golgi apparatus. Subunit of non-clathrin- and clathrin-associated adaptor protein complex 3 (AP-3) that plays a role in protein sorting in the late-Golgi/trans-Golgi network (TGN) and/or endosomes. The AP complexes mediate both the recruitment of clathrin to membranes and the recognition of sorting signals within the cytosolic tails of transmembrane cargo molecules. AP-3 appears to be involved in the sorting of a subset of transmembrane proteins targeted to lysosomes and lysosome-related organelles. In concert with the BLOC-1 complex, AP-3 is required to target cargos into vesicles assembled at cell bodies for delivery into neurites and nerve terminals. The polypeptide is AP-3 complex subunit beta-1 (AP3B1) (Homo sapiens (Human)).